The following is a 440-amino-acid chain: C4-dicarboxylate transport protein (440 aa).

Helical transmembrane passes span Leu8 to Ala28, Phe40 to Ile60, Leu74 to Val94, Gly147 to Lys167, Ile187 to Val207, Leu221 to Leu241, Val288 to Leu308, and Ala354 to Val374. The disordered stretch occupies residues Asp419–Gly440.

The protein belongs to the dicarboxylate/amino acid:cation symporter (DAACS) (TC 2.A.23) family.

It is found in the cell inner membrane. In terms of biological role, responsible for the transport of dicarboxylates such as succinate, fumarate, and malate from the periplasm across the membrane. The sequence is that of C4-dicarboxylate transport protein from Anaeromyxobacter dehalogenans (strain 2CP-C).